Consider the following 467-residue polypeptide: Dimethylamine methyltransferase MtbB1 (467 aa).

Residue Pyl356 is a non-standard amino acid, pyrrolysine.

It belongs to the dimethylamine methyltransferase family.

The catalysed reaction is Co(I)-[dimethylamine-specific corrinoid protein] + dimethylamine + H(+) = methyl-Co(III)-[dimethylamine-specific corrinoid protein] + methylamine. Its pathway is one-carbon metabolism; methanogenesis from dimethylamine. Its function is as follows. Catalyzes the transfer of a methyl group from dimethylamine to the corrinoid cofactor of MtbC. The sequence is that of Dimethylamine methyltransferase MtbB1 (mtbB1) from Methanosarcina barkeri (strain Fusaro / DSM 804).